A 166-amino-acid chain; its full sequence is Cofilin-2 (166 aa).

Position 2 is an N-acetylalanine (Ala2). Phosphoserine is present on Ser3. The ADF-H domain maps to 4–153 (GVTVNDEVIK…KDRSTLGEKL (150 aa)). Thr6 bears the Phosphothreonine mark. Residues 30–34 (KKRKK) carry the Nuclear localization signal motif.

Belongs to the actin-binding proteins ADF family. As to quaternary structure, interacts with CSRP3; possibly two molecules of CFL2 can interact with one molecule if CSRP3. In terms of processing, the phosphorylation of Ser-24 may prevent recognition of the nuclear localization signal. In terms of tissue distribution, predominantly expressed in skeletal muscle.

The protein localises to the nucleus matrix. The protein resides in the cytoplasm. Its subcellular location is the cytoskeleton. Controls reversibly actin polymerization and depolymerization in a pH-sensitive manner. It has the ability to bind G- and F-actin in a 1:1 ratio of cofilin to actin. It is the major component of intranuclear and cytoplasmic actin rods. Required for muscle maintenance. May play a role during the exchange of alpha-actin forms during the early postnatal remodeling of the sarcomere. In Mus musculus (Mouse), this protein is Cofilin-2 (Cfl2).